A 369-amino-acid polypeptide reads, in one-letter code: Mitogen-activated protein kinase 5 (369 aa).

The Protein kinase domain occupies Gln36 to Leu322. Residues Ile42–Val50 and Lys65 each bind ATP. The active-site Proton acceptor is Asp162. Thr194 is subject to Phosphothreonine. Positions Thr194 to Tyr196 match the TXY motif. At Tyr196 the chain carries Phosphotyrosine.

This sequence belongs to the protein kinase superfamily. CMGC Ser/Thr protein kinase family. MAP kinase subfamily. In terms of assembly, interacts with MKK1. In terms of processing, dually phosphorylated on Thr-194 and Tyr-196, which activates the enzyme.

It catalyses the reaction L-seryl-[protein] + ATP = O-phospho-L-seryl-[protein] + ADP + H(+). The catalysed reaction is L-threonyl-[protein] + ATP = O-phospho-L-threonyl-[protein] + ADP + H(+). With respect to regulation, activated by threonine and tyrosine phosphorylation. In terms of biological role, involved in disease resistance and abiotic stress tolerance signaling pathways. This is Mitogen-activated protein kinase 5 (MPK5) from Oryza sativa subsp. indica (Rice).